A 116-amino-acid chain; its full sequence is Aspartate 1-decarboxylase (116 aa).

The active-site Schiff-base intermediate with substrate; via pyruvic acid is Ser25. Residue Ser25 is modified to Pyruvic acid (Ser). Thr57 provides a ligand contact to substrate. Tyr58 acts as the Proton donor in catalysis. Position 73-75 (Gly73–Ala75) interacts with substrate.

This sequence belongs to the PanD family. As to quaternary structure, heterooctamer of four alpha and four beta subunits. Pyruvate serves as cofactor. Post-translationally, is synthesized initially as an inactive proenzyme, which is activated by self-cleavage at a specific serine bond to produce a beta-subunit with a hydroxyl group at its C-terminus and an alpha-subunit with a pyruvoyl group at its N-terminus.

It is found in the cytoplasm. The catalysed reaction is L-aspartate + H(+) = beta-alanine + CO2. It participates in cofactor biosynthesis; (R)-pantothenate biosynthesis; beta-alanine from L-aspartate: step 1/1. Catalyzes the pyruvoyl-dependent decarboxylation of aspartate to produce beta-alanine. This chain is Aspartate 1-decarboxylase, found in Christiangramia forsetii (strain DSM 17595 / CGMCC 1.15422 / KT0803) (Gramella forsetii).